A 638-amino-acid polypeptide reads, in one-letter code: Probable glycerol-3-phosphate dehydrogenase, mitochondrial (638 aa).

An FAD-binding site is contributed by Asp100–Glu128.

The protein belongs to the FAD-dependent glycerol-3-phosphate dehydrogenase family. Requires FAD as cofactor.

Its subcellular location is the mitochondrion. The catalysed reaction is a quinone + sn-glycerol 3-phosphate = dihydroxyacetone phosphate + a quinol. Its pathway is polyol metabolism; glycerol degradation via glycerol kinase pathway; glycerone phosphate from sn-glycerol 3-phosphate (anaerobic route): step 1/1. In Dictyostelium discoideum (Social amoeba), this protein is Probable glycerol-3-phosphate dehydrogenase, mitochondrial.